The primary structure comprises 369 residues: MSLTRVSVTAVRNLHPVTLSPSPRINILYGDNGSGKTSVLEAIHLLGLARSFRSARLQPVIQYEEAACTVFGQVMLANGIASNLGISRERQGEFTIRIDGQNARSAAQLAETLPLQLINPDSFRLLEGAPKIRRQFLDWGVFHVEPRFLPVWQRLQKALRQRNSWLRHGKLDPASQAAWDRELSLASDEIDAYRRSYIQALKPVFEETLAELVSLDDLTLSYYRGWDKDRDLLEVLASSLLRDQQMGHTQAGPQRADLRIRLSGHNAAEILSRGQQKLVVCALRIAQGHLINRAKRGQCVYLVDDLPSELDEQHRMALCRLLEDLGCQVFITCVDPQLLKDGWRTDTPVSMFHVEHGKVSQTTTIGSEA.

Residue 30–37 (GDNGSGKT) participates in ATP binding.

It belongs to the RecF family.

It is found in the cytoplasm. Its function is as follows. The RecF protein is involved in DNA metabolism; it is required for DNA replication and normal SOS inducibility. RecF binds preferentially to single-stranded, linear DNA. It also seems to bind ATP. The chain is DNA replication and repair protein RecF from Pseudomonas aeruginosa (strain LESB58).